A 216-amino-acid chain; its full sequence is Small ribosomal subunit protein uS3 (216 aa).

Residues 38-108 (LREFVKKKLH…DLAIDIQEVK (71 aa)) enclose the KH type-2 domain.

This sequence belongs to the universal ribosomal protein uS3 family. Part of the 30S ribosomal subunit. Forms a tight complex with proteins S10 and S14.

Functionally, binds the lower part of the 30S subunit head. Binds mRNA in the 70S ribosome, positioning it for translation. This chain is Small ribosomal subunit protein uS3, found in Desulfosudis oleivorans (strain DSM 6200 / JCM 39069 / Hxd3) (Desulfococcus oleovorans).